A 145-amino-acid chain; its full sequence is Large ribosomal subunit protein uL13 (145 aa).

The protein belongs to the universal ribosomal protein uL13 family. As to quaternary structure, part of the 50S ribosomal subunit.

This protein is one of the early assembly proteins of the 50S ribosomal subunit, although it is not seen to bind rRNA by itself. It is important during the early stages of 50S assembly. The polypeptide is Large ribosomal subunit protein uL13 (Brevibacillus brevis (strain 47 / JCM 6285 / NBRC 100599)).